The following is a 402-amino-acid chain: Multidrug resistance protein MdtH (402 aa).

11 consecutive transmembrane segments (helical) span residues 13-33 (YFLLVDNMLVVLGFFVVFPLI), 34-54 (SIRFVDQMGWAALMVGIALGL), 99-116 (PWLLWFSCFLSGLGGTLF), 139-159 (LLMMQDSAGAVIGALLGSWLL), 165-185 (LVCATGAALFILCAAFNAWLL), 214-234 (VLTLTGYYMLAVQVMLMLPIM), 243-263 (AAVKWMYAIEACLSLTLLYPI), 277-297 (LMAGLLVMTLSMMPIGLVSSV), 300-320 (LFVLICTFYIGSIIAEPARET), 340-360 (LGLALGGALGYAGGGWLFDSG), and 368-388 (LPWVMLGVVGFITLIALWWQF).

Belongs to the major facilitator superfamily. DHA1 family. MdtH (TC 2.A.1.2.21) subfamily.

The protein resides in the cell inner membrane. The chain is Multidrug resistance protein MdtH from Enterobacter sp. (strain 638).